Reading from the N-terminus, the 124-residue chain is NADPH-dependent 7-cyano-7-deazaguanine reductase (124 aa).

Cys40 serves as the catalytic Thioimide intermediate. Asp47 (proton donor) is an active-site residue. Substrate-binding positions include 62–64 and 81–82; these read VEL and HE.

The protein belongs to the GTP cyclohydrolase I family. QueF type 1 subfamily.

Its subcellular location is the cytoplasm. It catalyses the reaction 7-aminomethyl-7-carbaguanine + 2 NADP(+) = 7-cyano-7-deazaguanine + 2 NADPH + 3 H(+). Its pathway is tRNA modification; tRNA-queuosine biosynthesis. Catalyzes the NADPH-dependent reduction of 7-cyano-7-deazaguanine (preQ0) to 7-aminomethyl-7-deazaguanine (preQ1). This chain is NADPH-dependent 7-cyano-7-deazaguanine reductase, found in Wolinella succinogenes (strain ATCC 29543 / DSM 1740 / CCUG 13145 / JCM 31913 / LMG 7466 / NCTC 11488 / FDC 602W) (Vibrio succinogenes).